The primary structure comprises 83 residues: NAD(P)H-quinone oxidoreductase subunit L (83 aa).

2 helical membrane-spanning segments follow: residues 17 to 37 and 53 to 73; these read VLLA…LALL and TAIY…APFI.

Belongs to the complex I NdhL subunit family. NDH-1 can be composed of about 15 different subunits; different subcomplexes with different compositions have been identified which probably have different functions.

It localises to the cellular thylakoid membrane. The enzyme catalyses a plastoquinone + NADH + (n+1) H(+)(in) = a plastoquinol + NAD(+) + n H(+)(out). It catalyses the reaction a plastoquinone + NADPH + (n+1) H(+)(in) = a plastoquinol + NADP(+) + n H(+)(out). Its function is as follows. NDH-1 shuttles electrons from an unknown electron donor, via FMN and iron-sulfur (Fe-S) centers, to quinones in the respiratory and/or the photosynthetic chain. The immediate electron acceptor for the enzyme in this species is believed to be plastoquinone. Couples the redox reaction to proton translocation, and thus conserves the redox energy in a proton gradient. Cyanobacterial NDH-1 also plays a role in inorganic carbon-concentration. The chain is NAD(P)H-quinone oxidoreductase subunit L from Synechococcus sp. (strain RCC307).